The chain runs to 349 residues: UDP-3-O-acylglucosamine N-acyltransferase (349 aa).

H246 acts as the Proton acceptor in catalysis.

Belongs to the transferase hexapeptide repeat family. LpxD subfamily. Homotrimer.

It carries out the reaction a UDP-3-O-[(3R)-3-hydroxyacyl]-alpha-D-glucosamine + a (3R)-hydroxyacyl-[ACP] = a UDP-2-N,3-O-bis[(3R)-3-hydroxyacyl]-alpha-D-glucosamine + holo-[ACP] + H(+). Its pathway is bacterial outer membrane biogenesis; LPS lipid A biosynthesis. Catalyzes the N-acylation of UDP-3-O-acylglucosamine using 3-hydroxyacyl-ACP as the acyl donor. Is involved in the biosynthesis of lipid A, a phosphorylated glycolipid that anchors the lipopolysaccharide to the outer membrane of the cell. The protein is UDP-3-O-acylglucosamine N-acyltransferase of Nostoc sp. (strain PCC 7120 / SAG 25.82 / UTEX 2576).